The chain runs to 447 residues: Signal recognition particle protein (447 aa).

Residues 108–115 (GLQGSGKT), 190–194 (DTAGR), and 248–251 (TKLD) contribute to the GTP site.

This sequence belongs to the GTP-binding SRP family. SRP54 subfamily. Part of the signal recognition particle protein translocation system, which is composed of SRP and FtsY. Interacts with RNA.

It localises to the cytoplasm. The enzyme catalyses GTP + H2O = GDP + phosphate + H(+). Its function is as follows. Involved in targeting and insertion of nascent membrane proteins into the cytoplasmic membrane. Binds to the hydrophobic signal sequence of the ribosome-nascent chain (RNC) as it emerges from the ribosomes. The SRP-RNC complex is then targeted to the cytoplasmic membrane where it interacts with the SRP receptor FtsY. The protein is Signal recognition particle protein of Mycoplasma mycoides.